We begin with the raw amino-acid sequence, 127 residues long: Fluoride-specific ion channel FluC 1 (127 aa).

Transmembrane regions (helical) follow at residues 4–24 (TLLA…LVSL), 35–55 (VGTL…LALF), 71–91 (TGFC…VYLI), and 101–121 (GTIL…FILV). The Na(+) site is built by Gly75 and Thr78.

It belongs to the fluoride channel Fluc/FEX (TC 1.A.43) family.

Its subcellular location is the cell inner membrane. The catalysed reaction is fluoride(in) = fluoride(out). Its activity is regulated as follows. Na(+) is not transported, but it plays an essential structural role and its presence is essential for fluoride channel function. Its function is as follows. Fluoride-specific ion channel. Important for reducing fluoride concentration in the cell, thus reducing its toxicity. This is Fluoride-specific ion channel FluC 1 from Yersinia pseudotuberculosis serotype I (strain IP32953).